Reading from the N-terminus, the 188-residue chain is Large ribosomal subunit protein eL18 (188 aa).

The segment at 147-188 is disordered; that stretch reads EANKHFGPAPGVPHSHTKAHVRSKGRQFERARGRRTSKGYKK. Basic residues-rich tracts occupy residues 161–171 and 178–188; these read SHTKAHVRSKG and RGRRTSKGYKK.

Belongs to the eukaryotic ribosomal protein eL18 family.

It is found in the cytoplasm. The sequence is that of Large ribosomal subunit protein eL18 (RpL18) from Diaphorina citri (Asian citrus psyllid).